We begin with the raw amino-acid sequence, 192 residues long: Peptide deformylase (192 aa).

Fe cation is bound by residues Cys-102 and His-145. Glu-146 is a catalytic residue. His-149 is a Fe cation binding site.

Belongs to the polypeptide deformylase family. The cofactor is Fe(2+).

It catalyses the reaction N-terminal N-formyl-L-methionyl-[peptide] + H2O = N-terminal L-methionyl-[peptide] + formate. Functionally, removes the formyl group from the N-terminal Met of newly synthesized proteins. Requires at least a dipeptide for an efficient rate of reaction. N-terminal L-methionine is a prerequisite for activity but the enzyme has broad specificity at other positions. In Thermus thermophilus (strain ATCC BAA-163 / DSM 7039 / HB27), this protein is Peptide deformylase.